Consider the following 413-residue polypeptide: Histidine--tRNA ligase (413 aa).

The protein belongs to the class-II aminoacyl-tRNA synthetase family. Homodimer.

It localises to the cytoplasm. It carries out the reaction tRNA(His) + L-histidine + ATP = L-histidyl-tRNA(His) + AMP + diphosphate + H(+). The protein is Histidine--tRNA ligase of Ehrlichia chaffeensis (strain ATCC CRL-10679 / Arkansas).